A 272-amino-acid chain; its full sequence is Putative phosphoenolpyruvate synthase regulatory protein (272 aa).

151 to 158 (GVSRSGKT) is an ADP binding site.

This sequence belongs to the pyruvate, phosphate/water dikinase regulatory protein family. PSRP subfamily.

The enzyme catalyses [pyruvate, water dikinase] + ADP = [pyruvate, water dikinase]-phosphate + AMP + H(+). It carries out the reaction [pyruvate, water dikinase]-phosphate + phosphate + H(+) = [pyruvate, water dikinase] + diphosphate. In terms of biological role, bifunctional serine/threonine kinase and phosphorylase involved in the regulation of the phosphoenolpyruvate synthase (PEPS) by catalyzing its phosphorylation/dephosphorylation. The protein is Putative phosphoenolpyruvate synthase regulatory protein of Desulfotalea psychrophila (strain LSv54 / DSM 12343).